Consider the following 319-residue polypeptide: tRNA-cytidine(32) 2-sulfurtransferase (319 aa).

Residues 43-48 (SGGKDS) carry the PP-loop motif motif. [4Fe-4S] cluster-binding residues include cysteine 118, cysteine 121, and cysteine 209.

This sequence belongs to the TtcA family. Homodimer. It depends on Mg(2+) as a cofactor. The cofactor is [4Fe-4S] cluster.

It localises to the cytoplasm. It carries out the reaction cytidine(32) in tRNA + S-sulfanyl-L-cysteinyl-[cysteine desulfurase] + AH2 + ATP = 2-thiocytidine(32) in tRNA + L-cysteinyl-[cysteine desulfurase] + A + AMP + diphosphate + H(+). It functions in the pathway tRNA modification. Functionally, catalyzes the ATP-dependent 2-thiolation of cytidine in position 32 of tRNA, to form 2-thiocytidine (s(2)C32). The sulfur atoms are provided by the cysteine/cysteine desulfurase (IscS) system. The sequence is that of tRNA-cytidine(32) 2-sulfurtransferase from Neisseria meningitidis serogroup C (strain 053442).